Reading from the N-terminus, the 453-residue chain is Gamma-glutamylpolyamine synthetase GlnA2 (453 aa).

Residues 15–100 (RDIRFVRLWF…MFCDILMPDG (86 aa)) enclose the GS beta-grasp domain. Positions 107–453 (PRYVLKRALA…FELRKSLPVL (347 aa)) constitute a GS catalytic domain. The Mg(2+) site is built by E130 and E132. E182 provides a ligand contact to ATP. Positions 187 and 194 each coordinate Mg(2+). L-glutamate is bound at residue G239. H243 contributes to the Mg(2+) binding site. ATP is bound at residue 245–247 (HLS). R296, E310, and R322 together coordinate L-glutamate. R322 and R327 together coordinate ATP. E342 is a binding site for Mg(2+). R344 provides a ligand contact to L-glutamate.

Belongs to the glutamine synthetase family. It depends on Mg(2+) as a cofactor.

The enzyme catalyses putrescine + L-glutamate + ATP = gamma-L-glutamylputrescine + ADP + phosphate + H(+). The catalysed reaction is spermine + L-glutamate + ATP = gamma-L-glutamylspermine + ADP + phosphate + H(+). It catalyses the reaction spermidine + L-glutamate + ATP = gamma-L-glutamylspermidine + ADP + phosphate + H(+). It carries out the reaction cadaverine + L-glutamate + ATP = gamma-L-glutamylcadaverine + ADP + phosphate + H(+). Its pathway is amine and polyamine degradation; putrescine degradation. It participates in amine and polyamine degradation; spermidine degradation. The protein operates within amine and polyamine degradation; spermine degradation. With respect to regulation, no effect on activity with glutamine synthetase (GS) inhibitor methionine sulfoximine (MSO). Involved in the catabolism of polyamines. Catalyzes the ATP-dependent gamma-glutamylation of polyamines. Substrates include putrescine, cadaverine, spermidine and spermine, with a preference for short-chain polyamine putrescine. No complementation of the L-glutamine auxotrophy of an E.coli glnA mutant. Together with GlnA3, enables survival of S.coelicolor under exposure to high local environmental polyamine concentrations, which is toxic to the cells. This chain is Gamma-glutamylpolyamine synthetase GlnA2, found in Streptomyces coelicolor (strain ATCC BAA-471 / A3(2) / M145).